An 82-amino-acid chain; its full sequence is uncharacterized protein (82 aa).

This is an uncharacterized protein from Ictalurid herpesvirus 1 (strain Auburn) (IcHV-1).